Consider the following 477-residue polypeptide: UDP-glycosyltransferase 71K1 (477 aa).

UDP-alpha-D-glucose-binding positions include Ser-285, 350–351, 368–376, and 390–393; these read WA, HCGWNSILE, and YAEQ.

Belongs to the UDP-glycosyltransferase family.

Glycosyltransferase that possesses chalcone and flavonol 2'-O-glycosyltransferase activity. Converts phloretin to phlorizin (phloretin 2'-O-glucoside), a potent antioxidant. Possesses glycosyltransferase activity toward quercetin, isoliquiritigenin, butein and caffeic acid. The polypeptide is UDP-glycosyltransferase 71K1 (Malus domestica (Apple)).